A 591-amino-acid chain; its full sequence is V-type ATP synthase alpha chain (591 aa).

233 to 240 (GPFGAGKT) provides a ligand contact to ATP.

Belongs to the ATPase alpha/beta chains family.

The enzyme catalyses ATP + H2O + 4 H(+)(in) = ADP + phosphate + 5 H(+)(out). In terms of biological role, produces ATP from ADP in the presence of a proton gradient across the membrane. The V-type alpha chain is a catalytic subunit. The protein is V-type ATP synthase alpha chain of Streptococcus pyogenes serotype M1.